Consider the following 374-residue polypeptide: MTNQNVIVSDRKPILGLKTITVSVSNSPLFSNSFPTYFNFPRRKLLKLLEAADKNNLVVAPKITSMIDSMRDSSPTRLRSSSYDSVSDNDDKTSWIVRFPSALNMFDEIVNAAKGKQIVMFLDYDGTLSPIVEDPDKAFITHEMREVVKDVASNFPTAIVTGRSIEKVRSFVQVNEIYYAGSHGMDIEGPTNENSNGQSNERVLFQPAREFLPMIEKVVNILEEKTKWIPGAMVENNKFCLSVHFRRVDEKRWPALAEVVKSVLIDYPKLKLTQGRKVLEIRPTIKWDKGQALNFLLKSLGYENSDDVVPVYIGDDRTDEDAFKVLRERGQGFGILVSKVPKDTNASYSLQDPSQVNKFLERLVEWKRKTVGEE.

Belongs to the trehalose phosphatase family. A divalent metal cation serves as cofactor. In terms of tissue distribution, expressed in flowers.

It carries out the reaction alpha,alpha-trehalose 6-phosphate + H2O = alpha,alpha-trehalose + phosphate. It functions in the pathway glycan biosynthesis; trehalose biosynthesis. Its function is as follows. Removes the phosphate from trehalose 6-phosphate to produce free trehalose. Trehalose accumulation in plant may improve abiotic stress tolerance. The polypeptide is Trehalose-phosphate phosphatase B (TPPB) (Arabidopsis thaliana (Mouse-ear cress)).